The sequence spans 395 residues: Renin (395 aa).

Residues 1 to 21 (MLRSWEFVLLISCFLCFSSDA) form the signal peptide. The propeptide at 22 to 43 (LQRISLKKMPSIRETLQEMGMK) is activation peptide. A glycan (N-linked (GlcNAc...) asparagine) is linked at Asn-64. The Peptidase A1 domain maps to 79–392 (YYGEISIGTP…DRQNNRIGFA (314 aa)). Residue Asp-97 is part of the active site. Disulfide bonds link Cys-110–Cys-117 and Cys-274–Cys-278. Asp-283 is an active-site residue. Cys-316 and Cys-351 are joined by a disulfide.

It belongs to the peptidase A1 family. In terms of processing, N-glycosylated. As to expression, expressed by the venom gland (at protein level).

Its subcellular location is the secreted. The catalysed reaction is Cleavage of Leu-|-Xaa bond in angiotensinogen to generate angiotensin I.. With respect to regulation, inhibited completely by aspartyl protease inhibitor pepstatin A, but not by the serine- or metalloproteinase inhibitors PMSF or EDTA. Its function is as follows. Renin is a highly specific endopeptidase, whose only known function is to generate angiotensin I from angiotensinogen in the plasma, initiating a cascade of reactions that produce an elevation of blood pressure and increased sodium retention by the kidney. This protein is also found in snake venom and shown to specifically cleave human and porcine angiotensinogen into angiotensin I. It does not have general protease activity, no cleavage of alpha or beta casein. May be directly responsible for elevation of blood pressure in the victims of envenomation. This chain is Renin, found in Echis ocellatus (Ocellated saw-scaled viper).